The primary structure comprises 600 residues: NADH-quinone oxidoreductase subunit C/D (600 aa).

An NADH dehydrogenase I subunit C region spans residues 1 to 190 (MIDLMPKKNT…EPFFLNEQKE (190 aa)). Positions 214–600 (EFMFLNLGPN…IDFVMSDVDR (387 aa)) are NADH dehydrogenase I subunit D.

This sequence in the N-terminal section; belongs to the complex I 30 kDa subunit family. It in the C-terminal section; belongs to the complex I 49 kDa subunit family. NDH-1 is composed of 13 different subunits. Subunits NuoB, CD, E, F, and G constitute the peripheral sector of the complex.

Its subcellular location is the cell membrane. The catalysed reaction is a quinone + NADH + 5 H(+)(in) = a quinol + NAD(+) + 4 H(+)(out). Functionally, NDH-1 shuttles electrons from NADH, via FMN and iron-sulfur (Fe-S) centers, to quinones in the respiratory chain. The immediate electron acceptor for the enzyme in this species is believed to be ubiquinone. Couples the redox reaction to proton translocation (for every two electrons transferred, four hydrogen ions are translocated across the cytoplasmic membrane), and thus conserves the redox energy in a proton gradient. The protein is NADH-quinone oxidoreductase subunit C/D of Buchnera aphidicola subsp. Acyrthosiphon pisum (strain 5A).